Here is a 95-residue protein sequence, read N- to C-terminus: Aspartyl/glutamyl-tRNA(Asn/Gln) amidotransferase subunit C (95 aa).

Belongs to the GatC family. As to quaternary structure, heterotrimer of A, B and C subunits.

The enzyme catalyses L-glutamyl-tRNA(Gln) + L-glutamine + ATP + H2O = L-glutaminyl-tRNA(Gln) + L-glutamate + ADP + phosphate + H(+). It carries out the reaction L-aspartyl-tRNA(Asn) + L-glutamine + ATP + H2O = L-asparaginyl-tRNA(Asn) + L-glutamate + ADP + phosphate + 2 H(+). In terms of biological role, allows the formation of correctly charged Asn-tRNA(Asn) or Gln-tRNA(Gln) through the transamidation of misacylated Asp-tRNA(Asn) or Glu-tRNA(Gln) in organisms which lack either or both of asparaginyl-tRNA or glutaminyl-tRNA synthetases. The reaction takes place in the presence of glutamine and ATP through an activated phospho-Asp-tRNA(Asn) or phospho-Glu-tRNA(Gln). The sequence is that of Aspartyl/glutamyl-tRNA(Asn/Gln) amidotransferase subunit C from Trichlorobacter lovleyi (strain ATCC BAA-1151 / DSM 17278 / SZ) (Geobacter lovleyi).